The sequence spans 197 residues: Carbohydrate-binding X8 domain-containing protein (197 aa).

Residues 1–19 (MAVLLPLFLLSFMFTYSNA) form the signal peptide. The segment covering 101 to 113 (SCLSSSSSNGTPT) has biased composition (low complexity). Residues 101–176 (SCLSSSSSNG…TSGDPNGGEE (76 aa)) form a disordered region. Residues 116–125 (YPSTGNSTTA) show a composition bias toward polar residues. The segment covering 126-145 (SPGTTNPSTGNSTNSTLPTN) has biased composition (low complexity). Polar residues predominate over residues 146–155 (DKPTSSTITF). Residues 156–170 (PDSTTMGPSSSTSGD) show a composition bias toward low complexity. The GPI-anchor amidated asparagine moiety is linked to residue N172. A propeptide spans 173–197 (GGEELSVRTTTIILLTTIAAVALRV) (removed in mature form).

In terms of tissue distribution, expressed in the sieve elements.

Its subcellular location is the cell membrane. The protein is Carbohydrate-binding X8 domain-containing protein of Arabidopsis thaliana (Mouse-ear cress).